The sequence spans 491 residues: Argininosuccinate lyase (491 aa).

Belongs to the lyase 1 family. Argininosuccinate lyase subfamily.

It localises to the cytoplasm. It carries out the reaction 2-(N(omega)-L-arginino)succinate = fumarate + L-arginine. The protein operates within amino-acid biosynthesis; L-arginine biosynthesis; L-arginine from L-ornithine and carbamoyl phosphate: step 3/3. This Methanococcoides burtonii (strain DSM 6242 / NBRC 107633 / OCM 468 / ACE-M) protein is Argininosuccinate lyase.